The sequence spans 433 residues: Probable phosphoglucosamine mutase (433 aa).

The active-site Phosphoserine intermediate is the Ser-91. Mg(2+) contacts are provided by Ser-91, Asp-229, Asp-231, and Asp-233. Ser-91 is subject to Phosphoserine.

Belongs to the phosphohexose mutase family. The cofactor is Mg(2+). In terms of processing, activated by phosphorylation.

It carries out the reaction alpha-D-glucosamine 1-phosphate = D-glucosamine 6-phosphate. Catalyzes the conversion of glucosamine-6-phosphate to glucosamine-1-phosphate. The sequence is that of Probable phosphoglucosamine mutase from Methanococcoides burtonii (strain DSM 6242 / NBRC 107633 / OCM 468 / ACE-M).